The sequence spans 273 residues: 2,3,4,5-tetrahydropyridine-2,6-dicarboxylate N-succinyltransferase (273 aa).

Substrate is bound by residues R104 and D141.

This sequence belongs to the transferase hexapeptide repeat family. In terms of assembly, homotrimer.

The protein localises to the cytoplasm. It catalyses the reaction (S)-2,3,4,5-tetrahydrodipicolinate + succinyl-CoA + H2O = (S)-2-succinylamino-6-oxoheptanedioate + CoA. It functions in the pathway amino-acid biosynthesis; L-lysine biosynthesis via DAP pathway; LL-2,6-diaminopimelate from (S)-tetrahydrodipicolinate (succinylase route): step 1/3. In Nitrosococcus oceani (strain ATCC 19707 / BCRC 17464 / JCM 30415 / NCIMB 11848 / C-107), this protein is 2,3,4,5-tetrahydropyridine-2,6-dicarboxylate N-succinyltransferase.